The chain runs to 218 residues: Thiopurine S-methyltransferase (218 aa).

S-adenosyl-L-methionine contacts are provided by Trp10, Leu45, Glu66, and Arg123.

It belongs to the class I-like SAM-binding methyltransferase superfamily. TPMT family.

The protein localises to the cytoplasm. The catalysed reaction is S-adenosyl-L-methionine + a thiopurine = S-adenosyl-L-homocysteine + a thiopurine S-methylether.. In Shewanella sp. (strain MR-4), this protein is Thiopurine S-methyltransferase.